Here is a 229-residue protein sequence, read N- to C-terminus: Lactate utilization protein C (229 aa).

Belongs to the LutC/YkgG family.

Functionally, is involved in L-lactate degradation and allows cells to grow with lactate as the sole carbon source. The polypeptide is Lactate utilization protein C (Shouchella clausii (strain KSM-K16) (Alkalihalobacillus clausii)).